The primary structure comprises 197 residues: Probable GTP-binding protein EngB (197 aa).

Residues 26-197 enclose the EngB-type G domain; the sequence is DLPEIALAGR…TSWDAILESL (172 aa). Residues 34–41, 61–65, 79–82, 146–149, and 178–180 contribute to the GTP site; these read GRSNVGKS, GKTQS, DVPG, TKAD, and FSS. Residues serine 41 and threonine 63 each coordinate Mg(2+).

Belongs to the TRAFAC class TrmE-Era-EngA-EngB-Septin-like GTPase superfamily. EngB GTPase family. The cofactor is Mg(2+).

Necessary for normal cell division and for the maintenance of normal septation. This chain is Probable GTP-binding protein EngB, found in Streptococcus mutans serotype c (strain ATCC 700610 / UA159).